A 203-amino-acid polypeptide reads, in one-letter code: Holliday junction branch migration complex subunit RuvA (203 aa).

Residues 1–64 (MIGRLRGYIL…EDAQLLYGFN (64 aa)) form a domain I region. Residues 65-142 (DKQERALFRE…KGLNGDLFNN (78 aa)) form a domain II region. The flexible linker stretch occupies residues 143 to 154 (SSEITLPTAAQA). The tract at residues 155–203 (AELDAEAEAASALVALGYKPQEASRMVSKIAKPGADCETLIRDALRAAL) is domain III.

This sequence belongs to the RuvA family. As to quaternary structure, homotetramer. Forms an RuvA(8)-RuvB(12)-Holliday junction (HJ) complex. HJ DNA is sandwiched between 2 RuvA tetramers; dsDNA enters through RuvA and exits via RuvB. An RuvB hexamer assembles on each DNA strand where it exits the tetramer. Each RuvB hexamer is contacted by two RuvA subunits (via domain III) on 2 adjacent RuvB subunits; this complex drives branch migration. In the full resolvosome a probable DNA-RuvA(4)-RuvB(12)-RuvC(2) complex forms which resolves the HJ.

It is found in the cytoplasm. The RuvA-RuvB-RuvC complex processes Holliday junction (HJ) DNA during genetic recombination and DNA repair, while the RuvA-RuvB complex plays an important role in the rescue of blocked DNA replication forks via replication fork reversal (RFR). RuvA specifically binds to HJ cruciform DNA, conferring on it an open structure. The RuvB hexamer acts as an ATP-dependent pump, pulling dsDNA into and through the RuvAB complex. HJ branch migration allows RuvC to scan DNA until it finds its consensus sequence, where it cleaves and resolves the cruciform DNA. In Serratia proteamaculans (strain 568), this protein is Holliday junction branch migration complex subunit RuvA.